Here is a 726-residue protein sequence, read N- to C-terminus: Catalase-peroxidase (726 aa).

The disordered stretch occupies residues 1–33 (MSTTDDTHNTLSTGKCPFHQGGHDRSAGAGTAS). Positions 105 to 226 (WHGAGTYRSI…LGATEMGLIY (122 aa)) form a cross-link, tryptophyl-tyrosyl-methioninium (Trp-Tyr) (with M-252). His-106 serves as the catalytic Proton acceptor. Positions 226-252 (YVNPEGPDHSGEPLSAAAAIRATFGNM) form a cross-link, tryptophyl-tyrosyl-methioninium (Tyr-Met) (with W-105). His-267 contributes to the heme b binding site.

This sequence belongs to the peroxidase family. Peroxidase/catalase subfamily. In terms of assembly, homodimer or homotetramer. Heme b serves as cofactor. Formation of the three residue Trp-Tyr-Met cross-link is important for the catalase, but not the peroxidase activity of the enzyme.

The enzyme catalyses H2O2 + AH2 = A + 2 H2O. It catalyses the reaction 2 H2O2 = O2 + 2 H2O. Bifunctional enzyme with both catalase and broad-spectrum peroxidase activity. This is Catalase-peroxidase from Salmonella choleraesuis (strain SC-B67).